A 396-amino-acid polypeptide reads, in one-letter code: Elongation factor Tu (396 aa).

One can recognise a tr-type G domain in the interval 10–206 (KPHVNVGTIG…TLDEYIPEPE (197 aa)). Residues 19 to 26 (GHVDHGKT) form a G1 region. 19–26 (GHVDHGKT) contacts GTP. Thr-26 is a Mg(2+) binding site. Residues 60–64 (GITIA) form a G2 region. Positions 81–84 (DCPG) are G3. GTP-binding positions include 81–85 (DCPGH) and 136–139 (NKAD). The segment at 136–139 (NKAD) is G4. Residues 174–176 (SAL) form a G5 region.

Belongs to the TRAFAC class translation factor GTPase superfamily. Classic translation factor GTPase family. EF-Tu/EF-1A subfamily. As to quaternary structure, monomer.

Its subcellular location is the cytoplasm. It catalyses the reaction GTP + H2O = GDP + phosphate + H(+). Functionally, GTP hydrolase that promotes the GTP-dependent binding of aminoacyl-tRNA to the A-site of ribosomes during protein biosynthesis. The polypeptide is Elongation factor Tu (Alcanivorax borkumensis (strain ATCC 700651 / DSM 11573 / NCIMB 13689 / SK2)).